A 341-amino-acid chain; its full sequence is D-aspartate oxidase (341 aa).

Positions 36, 37, 43, 44, 50, 307, 311, and 312 each coordinate FAD. The Microbody targeting signal motif lies at 339–341 (SKL).

It belongs to the DAMOX/DASOX family. Tetramer. Interacts with PEX5; the interaction is direct and required for localization of DDO to the peroxisome. FAD is required as a cofactor. As to expression, expressed in liver and kidney (at protein level). In the brain, expressed in the frontal, temporal, and occipital lobes of the cortex, hippocampus, striatum, diencephalon, brainstem, cerebellum, spinal cord, plexus choroiderus and ependyma (at protein level). Also expressed in the lung, muscle, heart, spleen, small intestine and testis (at protein level).

Its subcellular location is the peroxisome matrix. The protein localises to the cytoplasm. It localises to the cytosol. It carries out the reaction D-aspartate + O2 + H2O = oxaloacetate + H2O2 + NH4(+). The enzyme catalyses D-glutamate + O2 + H2O = H2O2 + 2-oxoglutarate + NH4(+). Inhibited by aminooxyacetic acid, malonate, meso-tartrate and potassium bromide. In terms of biological role, selectively catalyzes the oxidative deamination of acidic amino acids. Suppresses the level of D-aspartate in the brain, an amino acid that can act as an agonist for glutamate receptors. Protects the organism from the toxicity of D-amino acids. May also function in the intestine. In Rattus norvegicus (Rat), this protein is D-aspartate oxidase.